We begin with the raw amino-acid sequence, 56 residues long: Large ribosomal subunit protein bL33 (56 aa).

It belongs to the bacterial ribosomal protein bL33 family.

The polypeptide is Large ribosomal subunit protein bL33 (Beutenbergia cavernae (strain ATCC BAA-8 / DSM 12333 / CCUG 43141 / JCM 11478 / NBRC 16432 / NCIMB 13614 / HKI 0122)).